The chain runs to 474 residues: Phosphomannomutase (474 aa).

Serine 101 (phosphoserine intermediate) is an active-site residue. Residues serine 101, aspartate 242, aspartate 244, and aspartate 246 each contribute to the Mg(2+) site.

This sequence belongs to the phosphohexose mutase family. It depends on Mg(2+) as a cofactor.

The enzyme catalyses alpha-D-mannose 1-phosphate = D-mannose 6-phosphate. This is Phosphomannomutase (noeK) from Sinorhizobium fredii (strain NBRC 101917 / NGR234).